Reading from the N-terminus, the 336-residue chain is Protein-glutamate methylesterase/protein-glutamine glutaminase 2 (336 aa).

The Response regulatory domain occupies 2-119; that stretch reads KIAIVNDMPM…PNPKEAAAPL (118 aa). Aspartate 53 bears the 4-aspartylphosphate mark. The CheB-type methylesterase domain maps to 147–336; that stretch reads PSRRDRLVAI…APRLIEVFTQ (190 aa). Residues serine 159, histidine 186, and aspartate 279 contribute to the active site.

It belongs to the CheB family. Phosphorylated by CheA. Phosphorylation of the N-terminal regulatory domain activates the methylesterase activity.

Its subcellular location is the cytoplasm. It carries out the reaction [protein]-L-glutamate 5-O-methyl ester + H2O = L-glutamyl-[protein] + methanol + H(+). The catalysed reaction is L-glutaminyl-[protein] + H2O = L-glutamyl-[protein] + NH4(+). Functionally, involved in chemotaxis. Part of a chemotaxis signal transduction system that modulates chemotaxis in response to various stimuli. Catalyzes the demethylation of specific methylglutamate residues introduced into the chemoreceptors (methyl-accepting chemotaxis proteins or MCP) by CheR. Also mediates the irreversible deamidation of specific glutamine residues to glutamic acid. This is Protein-glutamate methylesterase/protein-glutamine glutaminase 2 from Pseudomonas syringae pv. syringae (strain B728a).